The chain runs to 149 residues: Arginine regulator (149 aa).

This sequence belongs to the ArgR family.

The protein localises to the cytoplasm. It functions in the pathway amino-acid degradation; L-arginine degradation via ADI pathway. Its function is as follows. Regulates the transcription of the arc operon, involved in arginine catabolism. This is Arginine regulator (argR1) from Bacillus cereus (strain ATCC 10987 / NRS 248).